Reading from the N-terminus, the 471-residue chain is Putative multidrug resistance protein MdtD (471 aa).

Transmembrane regions (helical) follow at residues 12–32, 49–69, 77–97, 102–124, 138–158, 165–185, 195–215, 220–240, 263–283, 286–306, 329–351, 393–413, and 431–451; these read LWIVAFGFFMQSLDTTIVNTA, MIIVSYVLTVAVMLPASGWLA, IFFTAIVLFTAGSLFCAQAST, VMARVLQGVGGAMMVPVGRLTVM, FVTLPGQVGPLLGPALGGVLV, WIFLINIPVGIVGAIATLCLM, FDLSGFLLLAAGMATLTLALD, LGISPAWLAGLVAVGLCALLL, FSLGLGGSFAGRIGSGMLPFM, VFLQIGLGFSPFHAGLMMIPM, VLVASTLGLAAVSLLFMFSALAG, LLSMVMQLSMSIGVTIAGLLL, and VFLYTYLSMAAIIALPALIFS.

It belongs to the major facilitator superfamily. TCR/Tet family.

Its subcellular location is the cell inner membrane. The chain is Putative multidrug resistance protein MdtD from Klebsiella pneumoniae subsp. pneumoniae (strain ATCC 700721 / MGH 78578).